The primary structure comprises 199 residues: dITP/XTP pyrophosphatase (199 aa).

8–13 (THNRNK) lines the substrate pocket. Asp68 (proton acceptor) is an active-site residue. Residue Asp68 coordinates Mg(2+). Substrate contacts are provided by residues Ser69, 151-154 (HGYD), Lys174, and 179-180 (HR).

Belongs to the HAM1 NTPase family. Homodimer. Mg(2+) is required as a cofactor.

It carries out the reaction XTP + H2O = XMP + diphosphate + H(+). The enzyme catalyses dITP + H2O = dIMP + diphosphate + H(+). It catalyses the reaction ITP + H2O = IMP + diphosphate + H(+). Its function is as follows. Pyrophosphatase that catalyzes the hydrolysis of nucleoside triphosphates to their monophosphate derivatives, with a high preference for the non-canonical purine nucleotides XTP (xanthosine triphosphate), dITP (deoxyinosine triphosphate) and ITP. Seems to function as a house-cleaning enzyme that removes non-canonical purine nucleotides from the nucleotide pool, thus preventing their incorporation into DNA/RNA and avoiding chromosomal lesions. In Leifsonia xyli subsp. xyli (strain CTCB07), this protein is dITP/XTP pyrophosphatase.